Consider the following 199-residue polypeptide: 3-isopropylmalate dehydratase small subunit (199 aa).

The protein belongs to the LeuD family. LeuD type 1 subfamily. In terms of assembly, heterodimer of LeuC and LeuD.

It carries out the reaction (2R,3S)-3-isopropylmalate = (2S)-2-isopropylmalate. It functions in the pathway amino-acid biosynthesis; L-leucine biosynthesis; L-leucine from 3-methyl-2-oxobutanoate: step 2/4. Functionally, catalyzes the isomerization between 2-isopropylmalate and 3-isopropylmalate, via the formation of 2-isopropylmaleate. In Tolumonas auensis (strain DSM 9187 / NBRC 110442 / TA 4), this protein is 3-isopropylmalate dehydratase small subunit.